The chain runs to 507 residues: Alkyl hydroperoxide reductase subunit F (507 aa).

Asp207–Ile222 contributes to the FAD binding site. Cys335 and Cys338 are joined by a disulfide. Position 347–361 (Asp347–Ala361) interacts with NAD(+). Thr467–Asp477 serves as a coordination point for FAD.

It belongs to the class-II pyridine nucleotide-disulfide oxidoreductase family. In terms of assembly, homodimer. The cofactor is FAD.

Serves to protect the cell against DNA damage by alkyl hydroperoxides. It can use either NADH or NADPH as electron donor for direct reduction of redox dyes or of alkyl hydroperoxides when combined with the AhpC protein. In Staphylococcus aureus (strain NCTC 8325 / PS 47), this protein is Alkyl hydroperoxide reductase subunit F (ahpF).